The chain runs to 211 residues: Protein Nef (211 aa).

Gly2 is lipidated: N-myristoyl glycine; by host. Ser6 carries the post-translational modification Phosphoserine; by host. An acidic; interacts with host PACS1 and PACS2; stabilizes the interaction of NEF/MHC-I with host AP1M1; necessary for MHC-I internalization region spans residues Glu67–Glu70. An SH3-binding; interaction with Src family tyrosine kinases region spans residues Pro74 to Pro83. Residues Pro77–Pro80 carry the PxxP; stabilizes the interaction of NEF/MHC-I with host AP1M1; necessary for MHC-I internalization motif. Positions Asp113–Trp129 are mediates dimerization, Nef-PTE1 interaction. A binding to ATP6V1H region spans residues Met153 to Val185. Residues Leu169–Leu170 carry the Dileucine internalization motif; necessary for CD4 internalization motif. Positions Asp179–Asp180 match the Diacidic; necessary for CD4 internalization motif.

It belongs to the lentivirus primate group Nef protein family. As to quaternary structure, monomer; cytosolic form. Homodimer; membrane bound form. Interacts with Nef associated p21-activated kinase (PAK2); this interaction activates PAK2. Associates with the Nef-MHC-I-AP1 complex; this complex is required for MHC-I internalization. Interacts (via C-terminus) with host PI3-kinase. Interacts with host PACS1; this interaction seems to be weak. Interacts with host PACS2. Interacts with host LCK and MAPK3; these interactions inhibit the kinase activity of the latter. Interacts with host ATP6V1H; this interaction may play a role in CD4 endocytosis. Associates with the CD4-Nef-AP2 complex; this complex is required for CD4 internalization. Interacts with host AP2 subunit alpha and AP2 subunit sigma2. Interacts with TCR-zeta chain; this interaction up-regulates the Fas ligand (FasL) surface expression. Interacts with host HCK, LYN, and SRC; these interactions activate the Src family kinases. Interacts with MAP3K5; this interaction inhibits the Fas and TNFR-mediated death signals. Interacts with beta-COP and PTE1. Interacts with human RACK1; this increases Nef phosphorylation by PKC. Interacts with TP53; this interaction decreases the half-life of TP53, protecting the infected cell against p53-mediated apoptosis. In terms of processing, the virion-associated Nef proteins are cleaved by the viral protease to release the soluble C-terminal core protein. Nef is probably cleaved concomitantly with viral structural proteins on maturation of virus particles. Post-translationally, myristoylated. Phosphorylated on serine residues, probably by host PKCdelta and theta.

It localises to the host cell membrane. The protein resides in the virion. Its subcellular location is the secreted. The protein localises to the host Golgi apparatus membrane. In terms of biological role, factor of infectivity and pathogenicity, required for optimal virus replication. Alters numerous pathways of T-lymphocyte function and down-regulates immunity surface molecules in order to evade host defense and increase viral infectivity. Alters the functionality of other immunity cells, like dendritic cells, monocytes/macrophages and NK cells. In infected CD4(+) T-lymphocytes, down-regulates the surface MHC-I, mature MHC-II, CD4, CD28, CCR5 and CXCR4 molecules. Mediates internalization and degradation of host CD4 through the interaction of with the cytoplasmic tail of CD4, the recruitment of AP-2 (clathrin adapter protein complex 2), internalization through clathrin coated pits, and subsequent transport to endosomes and lysosomes for degradation. Diverts host MHC-I molecules to the trans-Golgi network-associated endosomal compartments by an endocytic pathway to finally target them for degradation. MHC-I down-regulation may involve AP-1 (clathrin adapter protein complex 1) or possibly Src family kinase-ZAP70/Syk-PI3K cascade recruited by PACS2. In consequence infected cells are masked for immune recognition by cytotoxic T-lymphocytes. Decreasing the number of immune receptors also prevents reinfection by more HIV particles (superinfection). Down-regulates host SERINC3 and SERINC5 thereby excluding these proteins from the viral particles. Virion infectivity is drastically higher when SERINC3 or SERINC5 are excluded from the viral envelope, because these host antiviral proteins impair the membrane fusion event necessary for subsequent virion penetration. Functionally, bypasses host T-cell signaling by inducing a transcriptional program nearly identical to that of anti-CD3 cell activation. Interaction with TCR-zeta chain up-regulates the Fas ligand (FasL). Increasing surface FasL molecules and decreasing surface MHC-I molecules on infected CD4(+) cells send attacking cytotoxic CD8+ T-lymphocytes into apoptosis. Its function is as follows. Plays a role in optimizing the host cell environment for viral replication without causing cell death by apoptosis. Protects the infected cells from apoptosis in order to keep them alive until the next virus generation is ready to strike. Inhibits the Fas and TNFR-mediated death signals by blocking MAP3K5/ASK1. Decreases the half-life of TP53, protecting the infected cell against p53-mediated apoptosis. Inhibits the apoptotic signals regulated by the Bcl-2 family proteins through the formation of a Nef/PI3-kinase/PAK2 complex that leads to activation of PAK2 and induces phosphorylation of host BAD. In terms of biological role, extracellular Nef protein targets CD4(+) T-lymphocytes for apoptosis by interacting with CXCR4 surface receptors. In Homo sapiens (Human), this protein is Protein Nef.